Here is a 100-residue protein sequence, read N- to C-terminus: uncharacterized protein (100 aa).

The interval 1 to 86 is disordered; the sequence is MRGTRRGPSG…RHRPPEVTEP (86 aa). The span at 35-48 shows a compositional bias: pro residues; it reads DTPPPRAPPPPPPL.

This is an uncharacterized protein from Human herpesvirus 6A (strain Uganda-1102) (HHV-6 variant A).